Here is a 999-residue protein sequence, read N- to C-terminus: Translation initiation factor IF-2 (999 aa).

The segment at 50-407 (AFVNNTGSPA…RGQGQTVRLS (358 aa)) is disordered. Composition is skewed to pro residues over residues 60 to 89 (PAAP…PPGG) and 96 to 121 (PMPP…PPQS). Residues 136–162 (VAAAEARAAALKAEQEAAVKAAQAARQ) are compositionally biased toward low complexity. The span at 163–173 (QQRDNVRREPP) shows a compositional bias: basic and acidic residues. Pro residues predominate over residues 179 to 194 (RPGPRPGPGAMPPRPG). Positions 213–222 (GGRPPARGAG) are enriched in low complexity. Over residues 244–266 (RPSPASMPPRPSPASMPPRPSPA) the composition is skewed to pro residues. Residues 275–367 (RPGGPGSGRP…GAAGAFGRPG (93 aa)) are compositionally biased toward gly residues. The segment covering 371–380 (TRGRKSKKQR) has biased composition (basic residues). Residues 388-405 (SAPTMSSGAPRGQGQTVR) show a composition bias toward polar residues. The tr-type G domain maps to 490-662 (SRPPVVTVMG…VLLTADASLE (173 aa)). A G1 region spans residues 499-506 (GHVDHGKT). Residue 499–506 (GHVDHGKT) participates in GTP binding. The tract at residues 524–528 (GITQH) is G2. The segment at 549 to 552 (DTPG) is G3. GTP contacts are provided by residues 549–553 (DTPGH) and 603–606 (NKID). The segment at 603 to 606 (NKID) is G4. The G5 stretch occupies residues 639 to 641 (AAK).

The protein belongs to the TRAFAC class translation factor GTPase superfamily. Classic translation factor GTPase family. IF-2 subfamily.

The protein resides in the cytoplasm. In terms of biological role, one of the essential components for the initiation of protein synthesis. Protects formylmethionyl-tRNA from spontaneous hydrolysis and promotes its binding to the 30S ribosomal subunits. Also involved in the hydrolysis of GTP during the formation of the 70S ribosomal complex. The chain is Translation initiation factor IF-2 from Salinispora tropica (strain ATCC BAA-916 / DSM 44818 / JCM 13857 / NBRC 105044 / CNB-440).